Reading from the N-terminus, the 149-residue chain is UPF0756 membrane protein MS1439 (149 aa).

The next 4 helical transmembrane spans lie at 10–32 (IMLV…ISAL), 56–76 (VGII…KVQL), 82–102 (FLNW…WFAG), and 126–146 (VAFL…LAVI).

Belongs to the UPF0756 family.

It localises to the cell membrane. This chain is UPF0756 membrane protein MS1439, found in Mannheimia succiniciproducens (strain KCTC 0769BP / MBEL55E).